The primary structure comprises 1244 residues: MDARATELLATLRNGNVSVDVKTTSLAKLKSEIKQKHVPDAAISPLFESFRLAIASQHYSLSSAGFSALGHLLKRLTLQEQHEAIALQGRATYQLLLERLGDHKERIRSQAAQAFTDFWPAASADVEHHVLGAALIGKNARAKETSMVWLAKMTREYGLLFRIYVPALVTCLEDADGVVRDTAKSTVIELFQSAPPRAISDLKKQLIQNNVRKSIATSILSSLGANIVADSETSSSFQSQSRSDITRPATSFSHRREEVPRSQSVLSMRSHSNADVHNIPKIDAAFKSQSKPTRSGHSSKDPTLSHTASSESLPAPRQDTTDGEGVEPLYINSHREFDDTIREMLPHFEGKESEQNWILREKSIMTLRRLTKGNAPHDYQQYYLAGIKSVLDGILKTANSLRTTLSAAGCYLLQDIARTCGPAIDPMVEILLQSLIKLSAALKKITAQNGNVTVDVIIGNVSYTARILQHIWGACQDKNVQPRQFATGWIKTIIIRQGKHKGSIEHSGGLDLIEKCIKKGLGDPNPGVREGMRGTFWAFYSVWPERADVIMSALEPKSKNLLERDPNNTHRGVASQSFDGSRGSQPHSTKSSLKEAINAQKKARLAASSNVPSRPESAQSSFPDPKSGRPAPRRPTGTSTIRVPTGEKLSQSASLSSAPMRPASRPRRPELVRPATADPYSSRRSAAPTAQSKASSPSDSPQKSKSKLMTTPRSRNPLARPKSRMDNAANVTNDKQRADPAATLAPKMRRRGPSEPDVVSAAARARIAILSPSRTEGDFSVASSQVKIDQKAEEAFQGTPTRGIENGTPLPASPLRSPLKGAFSTPTRNRKSSDGAPPSRIPISPSYSSRRSSEEPMLPRTPLDSRRSRGESDEAASQIPAPVDQSPIIDAINSQSPGILKVYEDPQSPHSKHSIVLGDTVPKTPGSQAKVMPLEELPLNESTTVPNRKHNQLPEHTPLLQPSPILTPSSENSHRRWKKVEGSERRRSLSPRSKDPVKAQDMITRGLARIRTGALDVHGYRKFQNLIKYHESISKDDTKYEDILMALLEALEKPDGDKGAPSGRSLDLKTQVLVTIRLMLVINREAFAAFYPRVMTAIITARKQYELTNHIVSGLEETAEDIVSACNPPQVIDAILDLLETEERSFESYRMVAMGSYILSGLLRRLNNQKLYLSQAELERLGKFANENLRSTQPDVRRAIIDFCPELYDMVQSEDAFWSMVNSSVEDFRPLLTYYIMRRPEKIG.

HEAT repeat units follow at residues 87–124 and 159–196; these read LQGR…AASA and LLFR…SAPP. Residues 232-243 are compositionally biased toward low complexity; the sequence is ETSSSFQSQSRS. Disordered regions lie at residues 232-326, 561-758, and 795-998; these read ETSS…GEGV, LLER…EPDV, and AFQG…DPVK. Polar residues-rich tracts occupy residues 261 to 271, 287 to 312, 574 to 591, and 607 to 622; these read RSQSVLSMRSH, KSQS…SSES, ASQS…STKS, and ASSN…QSSF. Composition is skewed to low complexity over residues 652 to 663, 690 to 703, and 837 to 850; these read SASLSSAPMRPA, AQSK…SPQK, and PPSR…YSSR. Basic and acidic residues-rich tracts occupy residues 863–872 and 979–998; these read LDSRRSRGES and KVEG…DPVK. HEAT repeat units follow at residues 1038–1075 and 1126–1163; these read TKYE…VLVT and CNPP…SGLL.

Belongs to the CLASP family. Interacts with microtubules.

The protein resides in the cytoplasm. It localises to the cytoskeleton. It is found in the nucleus. The protein localises to the spindle. Its function is as follows. Microtubule binding protein that promotes the stabilization of dynamic microtubules. Required for mitotic spindle formation. The protein is Protein STU1 (STU1) of Coccidioides immitis (strain RS) (Valley fever fungus).